The chain runs to 446 residues: Coagulation factor VII (446 aa).

The first 24 residues, 1 to 24 (MVPQAHGLLLLCFLLQLQGPLGTA), serve as a signal peptide directing secretion. Residues 25-41 (VFITQEEAHGVLHRQRR) constitute a propeptide that is removed on maturation. The region spanning 42–86 (ANSLLEELWPGSLERECNEEQCSFEEAREIFKSPERTKQFWIVYS) is the Gla domain. 4-carboxyglutamate is present on residues Glu-47, Glu-48, Glu-55, Glu-57, Glu-60, Glu-61, Glu-66, Glu-67, Glu-70, and Glu-76. Residues Cys-58 and Cys-63 are joined by a disulfide bond. The 37-residue stretch at 87 to 123 (DGDQCASNPCQNGGTCQDHLKSYVCFCLLDFEGRNCE) folds into the EGF-like 1; calcium-binding domain. 10 cysteine pairs are disulfide-bonded: Cys-91-Cys-102, Cys-96-Cys-111, Cys-113-Cys-122, Cys-132-Cys-143, Cys-139-Cys-153, Cys-155-Cys-168, Cys-176-Cys-303, Cys-200-Cys-205, Cys-219-Cys-235, and Cys-351-Cys-370. O-linked (Glc...) serine; alternate glycosylation occurs at Ser-93. O-linked (Xyl...) serine; alternate glycosylation is present at Ser-93. Asp-104 bears the (3R)-3-hydroxyaspartate mark. In terms of domain architecture, EGF-like 2 spans 128-169 (EQLICANENGDCDQYCRDHVGTKRTCSCHEDYTLQPDEVSCK). Asn-186 carries N-linked (GlcNAc...) asparagine glycosylation. The 240-residue stretch at 194–433 (IVGGNVCPKG…YIDWLVRHMD (240 aa)) folds into the Peptidase S1 domain. His-234 functions as the Charge relay system in the catalytic mechanism. Residue Asn-244 is glycosylated (N-linked (GlcNAc...) asparagine). The active-site Charge relay system is Asp-283. Asp-379 serves as a coordination point for substrate. A disulfide bridge connects residues Cys-381 and Cys-409. Catalysis depends on Ser-385, which acts as the Charge relay system.

It belongs to the peptidase S1 family. Heterodimer of a light chain and a heavy chain linked by a disulfide bond. Post-translationally, the vitamin K-dependent, enzymatic carboxylation of some glutamate residues allows the modified protein to bind calcium. In terms of processing, the iron and 2-oxoglutarate dependent 3-hydroxylation of aspartate and asparagine is (R) stereospecific within EGF domains. Can be either O-glucosylated or O-xylosylated at Ser-93 by POGLUT1. In terms of tissue distribution, plasma and liver.

It localises to the secreted. It catalyses the reaction Selective cleavage of Arg-|-Ile bond in factor X to form factor Xa.. In terms of biological role, initiates the extrinsic pathway of blood coagulation. Serine protease that circulates in the blood in a zymogen form. Factor VII is converted to factor VIIa by factor Xa, factor XIIa, factor IXa, or thrombin by minor proteolysis. In the presence of tissue factor and calcium ions, factor VIIa then converts factor X to factor Xa by limited proteolysis. Factor VIIa also converts factor IX to factor IXa in the presence of tissue factor and calcium. The polypeptide is Coagulation factor VII (F7) (Mus musculus (Mouse)).